A 325-amino-acid polypeptide reads, in one-letter code: Formimidoylglutamase (325 aa).

Residues His-125, Asp-155, His-157, Asp-159, Cys-246, and Asp-248 each contribute to the Mn(2+) site.

It belongs to the arginase family. The cofactor is Mn(2+).

The enzyme catalyses N-formimidoyl-L-glutamate + H2O = formamide + L-glutamate. The protein operates within amino-acid degradation; L-histidine degradation into L-glutamate; L-glutamate from N-formimidoyl-L-glutamate (hydrolase route): step 1/1. Its function is as follows. Catalyzes the conversion of N-formimidoyl-L-glutamate to L-glutamate and formamide. The polypeptide is Formimidoylglutamase (Ralstonia nicotianae (strain ATCC BAA-1114 / GMI1000) (Ralstonia solanacearum)).